Consider the following 383-residue polypeptide: Acetylornithine deacetylase (383 aa).

His80 is a binding site for Zn(2+). Asp82 is a catalytic residue. Residue Asp112 coordinates Zn(2+). Glu144 is an active-site residue. Positions 145, 169, and 355 each coordinate Zn(2+).

Belongs to the peptidase M20A family. ArgE subfamily. Homodimer. The cofactor is Zn(2+). Requires Co(2+) as cofactor. Glutathione serves as cofactor.

The protein localises to the cytoplasm. The catalysed reaction is N(2)-acetyl-L-ornithine + H2O = L-ornithine + acetate. It functions in the pathway amino-acid biosynthesis; L-arginine biosynthesis; L-ornithine from N(2)-acetyl-L-ornithine (linear): step 1/1. Functionally, catalyzes the hydrolysis of the amide bond of N(2)-acetylated L-amino acids. Cleaves the acetyl group from N-acetyl-L-ornithine to form L-ornithine, an intermediate in L-arginine biosynthesis pathway, and a branchpoint in the synthesis of polyamines. The sequence is that of Acetylornithine deacetylase from Pectobacterium carotovorum subsp. carotovorum (strain PC1).